The sequence spans 288 residues: Polyamine aminopropyltransferase (288 aa).

The PABS domain maps to 9–238 (ETLHDQFGQY…GIMTFAWATD (230 aa)). Q33 lines the S-methyl-5'-thioadenosine pocket. The spermidine site is built by H64 and D88. S-methyl-5'-thioadenosine-binding positions include E108 and 140–141 (DG). D158 functions as the Proton acceptor in the catalytic mechanism. 158 to 161 (DCTD) lines the spermidine pocket. Residue P165 participates in S-methyl-5'-thioadenosine binding.

Belongs to the spermidine/spermine synthase family. As to quaternary structure, homodimer or homotetramer.

It is found in the cytoplasm. It carries out the reaction S-adenosyl 3-(methylsulfanyl)propylamine + putrescine = S-methyl-5'-thioadenosine + spermidine + H(+). It functions in the pathway amine and polyamine biosynthesis; spermidine biosynthesis; spermidine from putrescine: step 1/1. Its function is as follows. Catalyzes the irreversible transfer of a propylamine group from the amino donor S-adenosylmethioninamine (decarboxy-AdoMet) to putrescine (1,4-diaminobutane) to yield spermidine. The polypeptide is Polyamine aminopropyltransferase (Shigella flexneri serotype 5b (strain 8401)).